Here is a 635-residue protein sequence, read N- to C-terminus: Chaperone protein DnaK (635 aa).

Thr198 bears the Phosphothreonine; by autocatalysis mark. The tract at residues 597–635 (LYEQDQANNERHDTPETEKAEGDNVVDAEFQEIDDQDKK) is disordered. A compositionally biased stretch (basic and acidic residues) spans 604–618 (NNERHDTPETEKAEG). Acidic residues predominate over residues 620–635 (NVVDAEFQEIDDQDKK).

Belongs to the heat shock protein 70 family.

Its function is as follows. Acts as a chaperone. In Zymomonas mobilis subsp. mobilis (strain ATCC 31821 / ZM4 / CP4), this protein is Chaperone protein DnaK.